We begin with the raw amino-acid sequence, 365 residues long: Aminomethyltransferase (365 aa).

It belongs to the GcvT family. In terms of assembly, the glycine cleavage system is composed of four proteins: P, T, L and H.

It carries out the reaction N(6)-[(R)-S(8)-aminomethyldihydrolipoyl]-L-lysyl-[protein] + (6S)-5,6,7,8-tetrahydrofolate = N(6)-[(R)-dihydrolipoyl]-L-lysyl-[protein] + (6R)-5,10-methylene-5,6,7,8-tetrahydrofolate + NH4(+). In terms of biological role, the glycine cleavage system catalyzes the degradation of glycine. This chain is Aminomethyltransferase, found in Chlorobium phaeovibrioides (strain DSM 265 / 1930) (Prosthecochloris vibrioformis (strain DSM 265)).